A 199-amino-acid chain; its full sequence is Protein-methionine-sulfoxide reductase heme-binding subunit MsrQ (199 aa).

The next 5 membrane-spanning stretches (helical) occupy residues 10-30 (WLKV…ILSV), 79-99 (LLGL…SVLE), 118-138 (LTLG…STLW), 147-167 (WQKL…HYLW), and 169-189 (VKTL…LLAL).

This sequence belongs to the MsrQ family. In terms of assembly, heterodimer of a catalytic subunit (MsrP) and a heme-binding subunit (MsrQ). It depends on FMN as a cofactor. The cofactor is heme b.

It is found in the cell inner membrane. Its function is as follows. Part of the MsrPQ system that repairs oxidized periplasmic proteins containing methionine sulfoxide residues (Met-O), using respiratory chain electrons. Thus protects these proteins from oxidative-stress damage caused by reactive species of oxygen and chlorine generated by the host defense mechanisms. MsrPQ is essential for the maintenance of envelope integrity under bleach stress, rescuing a wide series of structurally unrelated periplasmic proteins from methionine oxidation. MsrQ provides electrons for reduction to the reductase catalytic subunit MsrP, using the quinone pool of the respiratory chain. The chain is Protein-methionine-sulfoxide reductase heme-binding subunit MsrQ from Yersinia enterocolitica serotype O:8 / biotype 1B (strain NCTC 13174 / 8081).